The following is a 395-amino-acid chain: Phosphoglycerate kinase (395 aa).

Residues 21–23 (DFN), R36, 59–62 (HLGR), R120, and R153 each bind substrate. ATP-binding positions include K203, G294, E325, and 351–354 (GGDS).

This sequence belongs to the phosphoglycerate kinase family. In terms of assembly, monomer.

Its subcellular location is the cytoplasm. It carries out the reaction (2R)-3-phosphoglycerate + ATP = (2R)-3-phospho-glyceroyl phosphate + ADP. Its pathway is carbohydrate degradation; glycolysis; pyruvate from D-glyceraldehyde 3-phosphate: step 2/5. The protein is Phosphoglycerate kinase of Finegoldia magna (strain ATCC 29328 / DSM 20472 / WAL 2508) (Peptostreptococcus magnus).